The following is a 316-amino-acid chain: Pentatricopeptide repeat-containing protein At1g19525 (316 aa).

PPR repeat units follow at residues 9 to 43 (DILT…GLRP), 44 to 78 (DEKI…ELKA), 79 to 113 (SEEV…SDGP), 115 to 149 (SFEA…GHKP), 150 to 184 (DDKC…GIEI), and 185 to 219 (GVIT…GEAP).

It belongs to the PPR family. P subfamily.

This is Pentatricopeptide repeat-containing protein At1g19525 from Arabidopsis thaliana (Mouse-ear cress).